The sequence spans 505 residues: Cytochrome P450 monooxygenase FGM1 (505 aa).

The first 23 residues, 1–23 (MPLILSITSSGTVLVLLTLLSLA), serve as a signal peptide directing secretion. 2 N-linked (GlcNAc...) asparagine glycosylation sites follow: Asn188 and Asn351. Cys450 contributes to the heme binding site.

The protein belongs to the cytochrome P450 family. Requires heme as cofactor.

It participates in secondary metabolite biosynthesis. Its function is as follows. Cytochrome P450 monooxygenase; part of the Fg3_54/C64 gene cluster that mediates the biosynthesis of the octapeptide fusaoctaxin A, a virulence factor that is required for cell-to-cell invasiveness of plant host. The 2 nonribosomal peptide synthetases NRPS9 and NRPS5 form an assembly line which likely utilizes GABA as a starter unit (loaded on the unique module M1 of NRPS9) and sequentially incorporates seven extender units composed of the residues L-Ala, L-allo-Ile, L-Ser, L-Val, L-Ser, L-Leu and L-Leu, respectively. During the process, each of the residues that are tethered on modules M3-M7 of NRPS5 containing an E domain can undergo an epimerization reaction to produce a D-configuration before the transpeptidation reaction occurs. The elongation of the peptidyl chain might be terminated by module M8-mediated L-Leu incorporation, followed by R domain-catalyzed 4 electron reduction to release the resulting octapeptide from the assembly line as an alcohol. Fusaoctaxin A is cleaved by the cluster specific ABC transporter FGM5 to the pentapeptide fusapentaxin A and the tripeptide fusatrixin A. The other enzymes from the cluster, FGM1, FGM2, FGM3 and FGM9 seem not to be involved in the biosynthesis of fusaoctaxin A and their functions have still to be determined. The polypeptide is Cytochrome P450 monooxygenase FGM1 (Gibberella zeae (strain ATCC MYA-4620 / CBS 123657 / FGSC 9075 / NRRL 31084 / PH-1) (Wheat head blight fungus)).